Reading from the N-terminus, the 84-residue chain is Large ribosomal subunit protein bL27 (84 aa).

The interval 1–25 (MAHKKGQGSTQNNRDSAGRRLGVKK) is disordered.

Belongs to the bacterial ribosomal protein bL27 family.

The chain is Large ribosomal subunit protein bL27 from Sulfurovum sp. (strain NBC37-1).